The following is a 465-amino-acid chain: Amino-acid carrier protein AlsT (465 aa).

10 helical membrane-spanning segments follow: residues Leu-20 to Phe-40, Val-82 to Ala-102, Trp-142 to Val-162, Val-177 to Gly-197, Ile-208 to Ile-228, Asn-241 to Ala-261, Leu-296 to Tyr-316, Ile-336 to Val-356, Ile-382 to Met-402, and Leu-405 to Ala-425.

It belongs to the alanine or glycine:cation symporter (AGCS) (TC 2.A.25) family.

It is found in the cell membrane. The sequence is that of Amino-acid carrier protein AlsT (alsT) from Bacillus subtilis (strain 168).